Here is a 130-residue protein sequence, read N- to C-terminus: Peptide methionine sulfoxide reductase MsrB (130 aa).

The MsrB domain maps to 8-130; that stretch reads LEEWRSMLDP…NSVCLDLVPR (123 aa). Zn(2+) is bound by residues C47, C50, C96, and C99. Residue C119 is the Nucleophile of the active site.

Belongs to the MsrB Met sulfoxide reductase family. Requires Zn(2+) as cofactor.

It catalyses the reaction L-methionyl-[protein] + [thioredoxin]-disulfide + H2O = L-methionyl-(R)-S-oxide-[protein] + [thioredoxin]-dithiol. The protein is Peptide methionine sulfoxide reductase MsrB of Pseudomonas fluorescens (strain ATCC BAA-477 / NRRL B-23932 / Pf-5).